An 89-amino-acid polypeptide reads, in one-letter code: Dynein light chain 1, cytoplasmic (89 aa).

At Lys36 the chain carries N6-acetyllysine. Lys43 is covalently cross-linked (Glycyl lysine isopeptide (Lys-Gly) (interchain with G-Cter in SUMO2)). The segment at Thr67–Gly89 is interaction with ESR1. Ser88 bears the Phosphoserine mark.

This sequence belongs to the dynein light chain family. In terms of assembly, homodimer. Monomer; the monomeric form is incapable of binding to target proteins. The cytoplasmic dynein 1 complex consists of two catalytic heavy chains (HCs) and a number of non-catalytic subunits presented by intermediate chains (ICs), light intermediate chains (LICs) and light chains (LCs); the composition seems to vary in respect to the IC, LIC and LC composition. The heavy chain homodimer serves as a scaffold for the probable homodimeric assembly of the respective non-catalytic subunits. The ICs and LICs bind directly to the HC dimer and the LCs assemble on the IC dimer. Interacts with TXNDC17. Interacts with WWC1 and ESR1. The WWC1-DYNLL1 interaction is mandatory for the recruitment and transactivation functions of ESR1 or DYNLL1 to the target chromatin. Interacts with BCL2L11. Interacts with BCL2; the interaction is greatly enhanced in the nucleus and in mitochondria upon induction of apoptosis. Interacts with PAK1; the interaction requires dimeric DYNLL1. Interacts with MYZAP. Part of an astrin (SPAG5)-kinastrin (SKAP) complex containing KNSTRN, SPAG5, PLK1, DYNLL1 and SGO2. Interacts with ATMIN; this interaction inhibits ATMIN transcriptional activity and hence may play a role in a feedback loop whereby DYNLL1 inhibits transactivation of its own promoter by ATMIN. Interacts with NEK9 (not phosphorylated at 'Ser-944'). Interacts with BICD2. Interacts with BCAS1. Interacts with Basson/BSN. Interacts with HDAC6. Interacts with TPPP. Interacts with AMBRA1 (via TQT motifs); tethering AMBRA1 to the cytoskeleton. Interacts with FAM83D/CHICA (via C-terminus). Interacts with HMMR, SPAG5/Astrin and KNSTRN/Kinastrin. Interacts with TLK2. Interacts with NOS1. Interacts with WWC1, WWC2 and WWC3. Interacts with MRE11; inhibiting MRE11 homodimerization and activity. As to quaternary structure, (Microbial infection) Interacts with bovine immunodeficiency virus Gag protein; this interaction is critical for intracellular microtubule-dependent viral genome transport. In terms of processing, phosphorylation at Ser-88 promotes recruitment to DNA double-strand breaks (DSBs) by TP53BP1 and ability to inhibit MRE11.

It is found in the cytoplasm. Its subcellular location is the cytoskeleton. The protein localises to the microtubule organizing center. The protein resides in the centrosome. It localises to the chromosome. It is found in the nucleus. Its subcellular location is the mitochondrion. Acts as one of several non-catalytic accessory components of the cytoplasmic dynein 1 complex that are thought to be involved in linking dynein to cargos and to adapter proteins that regulate dynein function. Cytoplasmic dynein 1 acts as a motor for the intracellular retrograde motility of vesicles and organelles along microtubules. May play a role in changing or maintaining the spatial distribution of cytoskeletal structures. In addition to its role in cytoskeleton and transport, acts as a protein-protein adapter, which inhibits and/or sequesters target proteins. Involved in the response to DNA damage by acting as a key regulator of DNA end resection: when phosphorylated at Ser-88, recruited to DNA double-strand breaks (DSBs) by TP53BP1 and acts by disrupting MRE11 dimerization, thereby inhibiting DNA end resection. In a subset of DSBs, DYNLL1 remains unphosphorylated and promotes the recruitment of the Shieldin complex. Binds and inhibits the catalytic activity of neuronal nitric oxide synthase/NOS1. Promotes transactivation functions of ESR1 and plays a role in the nuclear localization of ESR1. Regulates apoptotic activities of BCL2L11 by sequestering it to microtubules. Upon apoptotic stimuli the BCL2L11-DYNLL1 complex dissociates from cytoplasmic dynein and translocates to mitochondria and sequesters BCL2 thus neutralizing its antiapoptotic activity. This Bos taurus (Bovine) protein is Dynein light chain 1, cytoplasmic (DYNLL1).